The chain runs to 300 residues: Urease accessory protein UreD (300 aa).

Belongs to the UreD family. UreD, UreF and UreG form a complex that acts as a GTP-hydrolysis-dependent molecular chaperone, activating the urease apoprotein by helping to assemble the nickel containing metallocenter of UreC. The UreE protein probably delivers the nickel.

The protein localises to the cytoplasm. Functionally, required for maturation of urease via the functional incorporation of the urease nickel metallocenter. The protein is Urease accessory protein UreD of Prochlorococcus marinus (strain MIT 9215).